Consider the following 296-residue polypeptide: Glycine and tyrosine-rich protein (296 aa).

A signal peptide spans 1–18; sequence MKVLVTALIISFSTAVLT. Residues 157–280 form a disordered region; it reads MESRLRPQAT…NQPEETPAPN (124 aa). Over residues 172–264 the composition is skewed to low complexity; that stretch reads TGGQPSTGGK…STGGQPSTGG (93 aa).

In terms of tissue distribution, component of the acid-insoluble and acid-soluble organic matrix of calcified layers of the shell (at protein level).

It localises to the secreted. The sequence is that of Glycine and tyrosine-rich protein from Lottia gigantea (Giant owl limpet).